The chain runs to 313 residues: Probable lysophospholipase L2 (313 aa).

The protein resides in the cell inner membrane. The enzyme catalyses a 1-acyl-sn-glycero-3-phosphocholine + H2O = sn-glycerol 3-phosphocholine + a fatty acid + H(+). The chain is Probable lysophospholipase L2 (pldB) from Haemophilus influenzae (strain ATCC 51907 / DSM 11121 / KW20 / Rd).